The primary structure comprises 88 residues: Small ribosomal subunit protein uS19 (88 aa).

This sequence belongs to the universal ribosomal protein uS19 family.

In terms of biological role, protein S19 forms a complex with S13 that binds strongly to the 16S ribosomal RNA. The polypeptide is Small ribosomal subunit protein uS19 (Chlamydia caviae (strain ATCC VR-813 / DSM 19441 / 03DC25 / GPIC) (Chlamydophila caviae)).